A 233-amino-acid polypeptide reads, in one-letter code: Urease accessory protein UreF (233 aa).

The protein belongs to the UreF family. UreD, UreF and UreG form a complex that acts as a GTP-hydrolysis-dependent molecular chaperone, activating the urease apoprotein by helping to assemble the nickel containing metallocenter of UreC. The UreE protein probably delivers the nickel.

It localises to the cytoplasm. Required for maturation of urease via the functional incorporation of the urease nickel metallocenter. This chain is Urease accessory protein UreF, found in Polaromonas sp. (strain JS666 / ATCC BAA-500).